The sequence spans 187 residues: RNA pyrophosphohydrolase (187 aa).

One can recognise a Nudix hydrolase domain in the interval 6 to 149 (GYRANVGIIL…KRQVYRLALT (144 aa)). Residues 38-59 (GGIKSGETPTQAMYRELAEETG) carry the Nudix box motif.

This sequence belongs to the Nudix hydrolase family. RppH subfamily. A divalent metal cation serves as cofactor.

In terms of biological role, accelerates the degradation of transcripts by removing pyrophosphate from the 5'-end of triphosphorylated RNA, leading to a more labile monophosphorylated state that can stimulate subsequent ribonuclease cleavage. This is RNA pyrophosphohydrolase from Nitrosomonas eutropha (strain DSM 101675 / C91 / Nm57).